A 180-amino-acid polypeptide reads, in one-letter code: Large ribosomal subunit protein uL6 (180 aa).

Belongs to the universal ribosomal protein uL6 family. As to quaternary structure, part of the 50S ribosomal subunit.

Functionally, this protein binds to the 23S rRNA, and is important in its secondary structure. It is located near the subunit interface in the base of the L7/L12 stalk, and near the tRNA binding site of the peptidyltransferase center. The sequence is that of Large ribosomal subunit protein uL6 from Salinispora arenicola (strain CNS-205).